We begin with the raw amino-acid sequence, 101 residues long: NADH-quinone oxidoreductase subunit K (101 aa).

3 helical membrane-spanning segments follow: residues 4–24 (LTHY…GIFL), 30–50 (IVLL…FIAF), and 61–81 (IFVF…LAIL).

It belongs to the complex I subunit 4L family. NDH-1 is composed of 14 different subunits. Subunits NuoA, H, J, K, L, M, N constitute the membrane sector of the complex.

The protein resides in the cell inner membrane. The catalysed reaction is a quinone + NADH + 5 H(+)(in) = a quinol + NAD(+) + 4 H(+)(out). NDH-1 shuttles electrons from NADH, via FMN and iron-sulfur (Fe-S) centers, to quinones in the respiratory chain. The immediate electron acceptor for the enzyme in this species is believed to be ubiquinone. Couples the redox reaction to proton translocation (for every two electrons transferred, four hydrogen ions are translocated across the cytoplasmic membrane), and thus conserves the redox energy in a proton gradient. The chain is NADH-quinone oxidoreductase subunit K from Laribacter hongkongensis (strain HLHK9).